The sequence spans 37 residues: Large ribosomal subunit protein bL36 (37 aa).

This sequence belongs to the bacterial ribosomal protein bL36 family.

This Nocardia farcinica (strain IFM 10152) protein is Large ribosomal subunit protein bL36.